The chain runs to 120 residues: NAD(P)H-quinone oxidoreductase subunit 3, chloroplastic (120 aa).

3 consecutive transmembrane segments (helical) span residues 9–29, 64–84, and 88–108; these read IFWA…FISG, MFAL…PWAM, and VLGL…IVGL.

It belongs to the complex I subunit 3 family. In terms of assembly, NDH is composed of at least 16 different subunits, 5 of which are encoded in the nucleus.

The protein localises to the plastid. The protein resides in the chloroplast thylakoid membrane. The enzyme catalyses a plastoquinone + NADH + (n+1) H(+)(in) = a plastoquinol + NAD(+) + n H(+)(out). The catalysed reaction is a plastoquinone + NADPH + (n+1) H(+)(in) = a plastoquinol + NADP(+) + n H(+)(out). NDH shuttles electrons from NAD(P)H:plastoquinone, via FMN and iron-sulfur (Fe-S) centers, to quinones in the photosynthetic chain and possibly in a chloroplast respiratory chain. The immediate electron acceptor for the enzyme in this species is believed to be plastoquinone. Couples the redox reaction to proton translocation, and thus conserves the redox energy in a proton gradient. In Jasminum nudiflorum (Winter jasmine), this protein is NAD(P)H-quinone oxidoreductase subunit 3, chloroplastic.